The chain runs to 1044 residues: Probable pre-mRNA-splicing factor ATP-dependent RNA helicase DEAH6 (1044 aa).

Disordered stretches follow at residues Glu-99–Leu-134 and Arg-152–Asp-211. Acidic residues predominate over residues Glu-157–Glu-167. A compositionally biased stretch (basic and acidic residues) spans Glu-168–Asp-211. A Helicase ATP-binding domain is found at Leu-414 to Pro-577. Gly-427–Thr-434 lines the ATP pocket. The short motif at Asp-524–His-527 is the DEAH box element. A Helicase C-terminal domain is found at Ala-599–Gly-775.

The protein belongs to the DEAD box helicase family. DEAH subfamily. PRP2 sub-subfamily. As to expression, predominantly expressed in flowers.

It carries out the reaction ATP + H2O = ADP + phosphate + H(+). May be involved in pre-mRNA splicing. The protein is Probable pre-mRNA-splicing factor ATP-dependent RNA helicase DEAH6 of Arabidopsis thaliana (Mouse-ear cress).